Reading from the N-terminus, the 296-residue chain is GTPase Era (296 aa).

The 168-residue stretch at 7 to 174 folds into the Era-type G domain; it reads KAGYISIVGR…TEVIRHYLPE (168 aa). The interval 15 to 22 is G1; sequence GRPNVGKS. 15-22 serves as a coordination point for GTP; sequence GRPNVGKS. The G2 stretch occupies residues 41–45; the sequence is QTTRH. Residues 62–65 are G3; sequence DTPG. Residues 62–66 and 123–126 contribute to the GTP site; these read DTPGF and NKID. The segment at 123-126 is G4; the sequence is NKID. Residues 153–155 form a G5 region; the sequence is VSA. The KH type-2 domain occupies 205–281; the sequence is IGEEVPYSVS…YLEIWVKVKS (77 aa).

It belongs to the TRAFAC class TrmE-Era-EngA-EngB-Septin-like GTPase superfamily. Era GTPase family. Monomer.

The protein localises to the cytoplasm. It localises to the cell inner membrane. In terms of biological role, an essential GTPase that binds both GDP and GTP, with rapid nucleotide exchange. Plays a role in 16S rRNA processing and 30S ribosomal subunit biogenesis and possibly also in cell cycle regulation and energy metabolism. This is GTPase Era from Nitrosomonas eutropha (strain DSM 101675 / C91 / Nm57).